Reading from the N-terminus, the 619-residue chain is E3 ubiquitin-protein ligase DTX4 (619 aa).

2 consecutive WWE domains span residues 1–78 (MLLA…PVRR) and 79–155 (NYYD…RVRR). Disordered stretches follow at residues 238–281 (KPLD…PGPN) and 358–389 (PPPV…KGKT). The span at 261-273 (QASSMPTGTTMGS) shows a compositional bias: polar residues. Basic residues predominate over residues 378 to 387 (KTTKKQAKKG). Residues 409–468 (CTICMERLTAPSGYKGPQPTVKPDLVGKLSRCGHVYHIYCLVAMYNNGNKDGSLQCPTCK) form an RING-type; atypical zinc finger.

This sequence belongs to the Deltex family. As to quaternary structure, interacts with NLRP4.

The protein localises to the cytoplasm. It carries out the reaction S-ubiquitinyl-[E2 ubiquitin-conjugating enzyme]-L-cysteine + [acceptor protein]-L-lysine = [E2 ubiquitin-conjugating enzyme]-L-cysteine + N(6)-ubiquitinyl-[acceptor protein]-L-lysine.. Its pathway is protein modification; protein ubiquitination. Its function is as follows. Regulator of Notch signaling, a signaling pathway involved in cell-cell communications that regulates a broad spectrum of cell-fate determinations. Functions as a ubiquitin ligase protein in vivo, mediating 'Lys48'-linked polyubiquitination and promoting degradation of TBK1, targeting to TBK1 requires interaction with NLRP4. This is E3 ubiquitin-protein ligase DTX4 (DTX4) from Homo sapiens (Human).